A 316-amino-acid polypeptide reads, in one-letter code: Probable cell division protein WhiA (316 aa).

A DNA-binding region (H-T-H motif) is located at residues 275 to 309 (TLKELGEMVESGKISKSGINHRLRKLDQIAEQLRN).

Belongs to the WhiA family.

Involved in cell division and chromosome segregation. This chain is Probable cell division protein WhiA, found in Bacillus pumilus (strain SAFR-032).